The sequence spans 215 residues: Phosphatidylserine decarboxylase proenzyme (215 aa).

Residue Ser181 is the Schiff-base intermediate with substrate; via pyruvic acid of the active site. At Ser181 the chain carries Pyruvic acid (Ser); by autocatalysis.

It belongs to the phosphatidylserine decarboxylase family. PSD-A subfamily. Heterodimer of a large membrane-associated beta subunit and a small pyruvoyl-containing alpha subunit. Requires pyruvate as cofactor. Is synthesized initially as an inactive proenzyme. Formation of the active enzyme involves a self-maturation process in which the active site pyruvoyl group is generated from an internal serine residue via an autocatalytic post-translational modification. Two non-identical subunits are generated from the proenzyme in this reaction, and the pyruvate is formed at the N-terminus of the alpha chain, which is derived from the carboxyl end of the proenzyme. The post-translation cleavage follows an unusual pathway, termed non-hydrolytic serinolysis, in which the side chain hydroxyl group of the serine supplies its oxygen atom to form the C-terminus of the beta chain, while the remainder of the serine residue undergoes an oxidative deamination to produce ammonia and the pyruvoyl prosthetic group on the alpha chain.

Its subcellular location is the cell membrane. The enzyme catalyses a 1,2-diacyl-sn-glycero-3-phospho-L-serine + H(+) = a 1,2-diacyl-sn-glycero-3-phosphoethanolamine + CO2. Its pathway is phospholipid metabolism; phosphatidylethanolamine biosynthesis; phosphatidylethanolamine from CDP-diacylglycerol: step 2/2. Functionally, catalyzes the formation of phosphatidylethanolamine (PtdEtn) from phosphatidylserine (PtdSer). The sequence is that of Phosphatidylserine decarboxylase proenzyme from Polynucleobacter asymbioticus (strain DSM 18221 / CIP 109841 / QLW-P1DMWA-1) (Polynucleobacter necessarius subsp. asymbioticus).